The primary structure comprises 228 residues: Large ribosomal subunit protein uL23m (228 aa).

A disordered region spans residues 194-228; the sequence is PEEEGWSEVEENLPLDESAESAAEESSSKGSETRQ. Residues 195–216 are compositionally biased toward acidic residues; sequence EEEGWSEVEENLPLDESAESAA.

The protein belongs to the universal ribosomal protein uL23 family. In terms of assembly, component of the mitochondrial large ribosomal subunit (mt-LSU). Mature N.crassa 74S mitochondrial ribosomes consist of a small (37S) and a large (54S) subunit. The 37S small subunit contains a 16S ribosomal RNA (16S mt-rRNA) and 32 different proteins. The 54S large subunit contains a 23S rRNA (23S mt-rRNA) and 42 different proteins. uL23m forms the wall of the exit tunnel.

Its subcellular location is the mitochondrion. In terms of biological role, component of the mitochondrial ribosome (mitoribosome), a dedicated translation machinery responsible for the synthesis of mitochondrial genome-encoded proteins, including at least some of the essential transmembrane subunits of the mitochondrial respiratory chain. The mitoribosomes are attached to the mitochondrial inner membrane and translation products are cotranslationally integrated into the membrane. This is Large ribosomal subunit protein uL23m (mrp20) from Neurospora crassa (strain ATCC 24698 / 74-OR23-1A / CBS 708.71 / DSM 1257 / FGSC 987).